The sequence spans 666 residues: MRRPNLKWIVKASLLLLISLTLFVLITSWISSTPYTNKPVHHGVEPVPEKAGLSGDVKVKVPAIKQPEPQKPQEPDFEEDPELQKIDEPEPVEEEVDNPHPADDEPQQQPQEELQMAAPADASVKKDWHDYTFMEKDAKRVGLGEGGKASTLDDESQRDLEKRMSLENGFNALLSDSISVNRSVPDIRHPLCRKKEYVAKLPTVSVIIIFYNEYLSVLMRSVHSLINRSPPELMKEIILVDDHSDREYLGKELETYIAEHFKWVRVVRLPRRTGLIGARAAGARNATAEVLIFLDSHVEANYNWLPPLLEPIALNKRTAVCPFIDVIDHTNFHYRAQDEGARGAFDWEFFYKRLPLLPEDLKHPADPFKSPIMAGGLFAISREFFWELGGYDEGLDIWGGEQYELSFKIWMCGGEMYDAPCSRIGHIYRGPRNHQPSPRKGDYLHKNYKRVAEVWMDEYKNYLYSHGDGLYESVDPGDLTEQKAIRTKLNCKSFKWFMEEVAFDLMKTYPPVDPPSYAMGALQNVGNQNLCLDTLGRKKHNKMGMYACADNIKTPQRTQFWELSWKRDLRLRRKKECLDVQIWDANAPVWLWDCHSQGGNQYWYYDYRHKQLKHGTEGRRCLELLPFSQEVVANKCDTDNRFQQWNFGSFNKTALDNYSQDLVLSL.

The Cytoplasmic portion of the chain corresponds to 1 to 11; sequence MRRPNLKWIVK. Residues 12-31 traverse the membrane as a helical; Signal-anchor for type II membrane protein segment; it reads ASLLLLISLTLFVLITSWIS. The Lumenal portion of the chain corresponds to 32 to 666; it reads STPYTNKPVH…NYSQDLVLSL (635 aa). Positions 90-126 are disordered; that stretch reads EPVEEEVDNPHPADDEPQQQPQEELQMAAPADASVKK. Residues 107–120 are compositionally biased toward low complexity; sequence QQQPQEELQMAAPA. Residue Asn181 is glycosylated (N-linked (GlcNAc...) asparagine). Cystine bridges form between Cys192–Cys421, Cys412–Cys491, Cys531–Cys548, Cys577–Cys594, and Cys621–Cys636. Residues 201–311 are catalytic subdomain A; sequence LPTVSVIIIF…YNWLPPLLEP (111 aa). Positions 242 and 272 each coordinate substrate. Asn285 is a glycosylation site (N-linked (GlcNAc...) asparagine). Asp295 is a Mn(2+) binding site. A substrate-binding site is contributed by Ser296. His297 is a Mn(2+) binding site. Positions 367–429 are catalytic subdomain B; the sequence is PFKSPIMAGG…PCSRIGHIYR (63 aa). Trp398 is a substrate binding site. His426 is a Mn(2+) binding site. Arg429 is a binding site for substrate. The Ricin B-type lectin domain occupies 518 to 648; that stretch reads AMGALQNVGN…DNRFQQWNFG (131 aa). Asn651 and Asn657 each carry an N-linked (GlcNAc...) asparagine glycan.

Belongs to the glycosyltransferase 2 family. GalNAc-T subfamily. Requires Mn(2+) as cofactor. Expressed during oogenesis, in the somatically derived follicle cells that surround the developing oocyte, which are involved in the maturation of the oocyte and construction of the egg shell, as well as playing a role in subsequent embryonic pattern formation. Expressed in the salivary glands from embryonic stage 12 onwards, becoming stronger at stage 13. During embryonic stages 12-13, also expressed in the posterior midgut and hindgut. During embryonic stages 14-15, expression continues in the hindgut. Expression is detected in the epidermis and antennomaxillary complex during embryonic stages 16-17. In third instar larvae, ubiquitously expressed in wing, eye-antennal, leg and haltere imaginal disks.

It is found in the golgi apparatus membrane. The enzyme catalyses L-seryl-[protein] + UDP-N-acetyl-alpha-D-galactosamine = a 3-O-[N-acetyl-alpha-D-galactosaminyl]-L-seryl-[protein] + UDP + H(+). The catalysed reaction is L-threonyl-[protein] + UDP-N-acetyl-alpha-D-galactosamine = a 3-O-[N-acetyl-alpha-D-galactosaminyl]-L-threonyl-[protein] + UDP + H(+). It participates in protein modification; protein glycosylation. Its function is as follows. Glycopeptide transferase involved in O-linked oligosaccharide biosynthesis, which catalyzes the transfer of an N-acetyl-D-galactosamine residue to an already glycosylated peptide. In contrast to other proteins of the family, it does not act as a peptide transferase that transfers GalNAc onto serine or threonine residue on the protein receptor, but instead requires the prior addition of a GalNAc on a peptide before adding additional GalNAc moieties. Some peptide transferase activity is however not excluded, considering that its appropriate peptide substrate may remain unidentified. Prefers the diglycosylated Muc5AC-3/13 as substrate. Might have a role in protein O-glycosylation in the Golgi and thereby in establishing and/or maintaining a proper secretory apparatus structure. The chain is N-acetylgalactosaminyltransferase 6 from Drosophila melanogaster (Fruit fly).